Reading from the N-terminus, the 287-residue chain is Bifunctional protein FolD (287 aa).

NADP(+)-binding positions include 166 to 168, Ser191, and Ile232; that span reads GAS.

Belongs to the tetrahydrofolate dehydrogenase/cyclohydrolase family. In terms of assembly, homodimer.

The catalysed reaction is (6R)-5,10-methylene-5,6,7,8-tetrahydrofolate + NADP(+) = (6R)-5,10-methenyltetrahydrofolate + NADPH. It carries out the reaction (6R)-5,10-methenyltetrahydrofolate + H2O = (6R)-10-formyltetrahydrofolate + H(+). Its pathway is one-carbon metabolism; tetrahydrofolate interconversion. Its function is as follows. Catalyzes the oxidation of 5,10-methylenetetrahydrofolate to 5,10-methenyltetrahydrofolate and then the hydrolysis of 5,10-methenyltetrahydrofolate to 10-formyltetrahydrofolate. The sequence is that of Bifunctional protein FolD from Haemophilus ducreyi (strain 35000HP / ATCC 700724).